A 257-amino-acid chain; its full sequence is MILTALRGALGFLTRIPVGRDEAAWAAFARSPWTFPVVGYLVGGLVALSLFVPAPAPTVALAFVLAVYAVTGIGHLDGVADIGDAAAVHGDREERRRVLKDSALGVGGTVALALVVLGLATAALGLVEVAATAGDGGPLPPVIGIVVAAEVGAKAATATLVCVGDAPHEGLGSALTGESSPGATLSVFALAAPAALLTWPQVLPGLAALLVALATAALVARWSRRRLGGVSGDVLGATTELARVAALHAGVIAWTRF.

4 helical membrane-spanning segments follow: residues 28–48 (FARSPWTFPVVGYLVGGLVAL), 50–70 (LFVPAPAPTVALAFVLAVYAV), 110–130 (VALALVVLGLATAALGLVEVA), and 199–219 (WPQVLPGLAALLVALATAALV).

The protein belongs to the CobS family. Mg(2+) is required as a cofactor.

The protein resides in the cell membrane. The enzyme catalyses alpha-ribazole + adenosylcob(III)inamide-GDP = adenosylcob(III)alamin + GMP + H(+). It catalyses the reaction alpha-ribazole 5'-phosphate + adenosylcob(III)inamide-GDP = adenosylcob(III)alamin 5'-phosphate + GMP + H(+). It participates in cofactor biosynthesis; adenosylcobalamin biosynthesis; adenosylcobalamin from cob(II)yrinate a,c-diamide: step 7/7. Joins adenosylcobinamide-GDP and alpha-ribazole to generate adenosylcobalamin (Ado-cobalamin). Also synthesizes adenosylcobalamin 5'-phosphate from adenosylcobinamide-GDP and alpha-ribazole 5'-phosphate. The polypeptide is Adenosylcobinamide-GDP ribazoletransferase (Halorubrum lacusprofundi (strain ATCC 49239 / DSM 5036 / JCM 8891 / ACAM 34)).